Here is a 205-residue protein sequence, read N- to C-terminus: Outer-membrane lipoprotein LolB (205 aa).

The N-terminal stretch at 1–17 (MRLRLFLAASALALLSG) is a signal peptide. C18 carries N-palmitoyl cysteine lipidation. C18 carries S-diacylglycerol cysteine lipidation.

Belongs to the LolB family. In terms of assembly, monomer.

It is found in the cell outer membrane. Functionally, plays a critical role in the incorporation of lipoproteins in the outer membrane after they are released by the LolA protein. The sequence is that of Outer-membrane lipoprotein LolB from Pseudomonas paraeruginosa (strain DSM 24068 / PA7) (Pseudomonas aeruginosa (strain PA7)).